The sequence spans 1306 residues: Synergin gamma (1306 aa).

A coiled-coil region spans residues 113–153; that stretch reads MQKQFAEEQQKRFEQQQKLLEEERKRRQFEEQKQKLRLLSS. 2 disordered regions span residues 176-196 and 252-285; these read GFSRDAKMHPTPASHPKKQGP and SGPASAEAEKTSDQTLSKEESGVGVFPSQDPAQS. Positions 258–272 are enriched in basic and acidic residues; it reads EAEKTSDQTLSKEES. Positions 293-404 constitute an EH domain; sequence NESLVPDAYK…TPVSQPTAMP (112 aa). A DFXDF motif 1 motif is present at residues 455 to 459; that stretch reads DFQDF. Positions 460–494 are disordered; it reads QDASKSGSIDDSFTDFQEMPASSKTSNSQHGNSAP. Serine 471 carries the post-translational modification Phosphoserine. Lysine 509 carries the N6-acetyllysine modification. The tract at residues 514 to 778 is interaction with AP1G1; sequence KGISTDKPSE…ADFHSSKFSS (265 aa). The interval 559–601 is disordered; sequence STGTDDGFTDFKTADSVSPLEPPTKDTFPSAFASGAAQQTQTQ. Residue serine 576 is modified to Phosphoserine. The interaction with AP1G1, AP1G2 and GGA1 stretch occupies residues 661–673; that stretch reads LADDFGEFNLFGE. The DFXDF motif 2 signature appears at 685–689; it reads DFADF. A disordered region spans residues 697–730; sequence ISSEPKASDKYEALREEVSPSPLSSSTVEGAQHP. Positions 702-714 are enriched in basic and acidic residues; it reads KASDKYEALREEV. Residue serine 715 is modified to Phosphoserine. N6-acetyllysine is present on lysine 736. Residues serine 744 and serine 764 each carry the phosphoserine modification. The DFXDF motif 3 motif lies at 767–771; it reads DFADF. Residues serine 804, serine 844, serine 847, serine 901, serine 911, serine 927, serine 974, serine 998, serine 1065, serine 1067, serine 1079, and serine 1090 each carry the phosphoserine modification. 2 disordered regions span residues 986–1016 and 1065–1090; these read PTVDRSQETSCPSPASSVASHETPKEGADDF and SLSLGDKEISRSSPSPALEQPFRDRS. Residues 993–1005 show a composition bias toward polar residues; the sequence is ETSCPSPASSVAS. Threonine 1092 is modified (phosphothreonine).

In terms of assembly, self-associates. Interacts with GGA1 (via GAE domain). Interacts with GGA2 and GGA3. Interacts with AP1G1 (via GAE domain), a subunit of adapter protein complex AP-1. Interacts with AP1G2 (via GAE domain) a subunit of adapter protein complex AP-1. Component of the aftiphilin/p200/gamma-synergin complex, at least composed of AFTPH/aftiphilin, HEATR5B/p200a and SYNRG/gamma-synergin, which plays a role in the AP1G1/AP-1-mediated trafficking of transferrin from early to recycling endosomes. Within the complex interacts with AFTPH/aftiphilin and HEATR5B/p200a; the interactions are direct. Interacts (via EH domain) with SCAMP1.

It is found in the cytoplasm. Its subcellular location is the cytosol. The protein resides in the golgi apparatus. The protein localises to the trans-Golgi network membrane. It localises to the perinuclear region. It is found in the cytoplasmic vesicle. Its subcellular location is the clathrin-coated vesicle. Its function is as follows. Plays a role in endocytosis and/or membrane trafficking at the trans-Golgi network (TGN). May act by linking the adapter protein complex AP-1 to other proteins. Component of clathrin-coated vesicles. Component of the aftiphilin/p200/gamma-synergin complex, which plays roles in AP1G1/AP-1-mediated protein trafficking including the trafficking of transferrin from early to recycling endosomes, and the membrane trafficking of furin and the lysosomal enzyme cathepsin D between the trans-Golgi network (TGN) and endosomes. The polypeptide is Synergin gamma (Synrg) (Mus musculus (Mouse)).